We begin with the raw amino-acid sequence, 111 residues long: Small ribosomal subunit protein bS16 (111 aa).

The segment at 92–111 (MDVKAKNRKARSSKQEAKEA) is disordered.

This sequence belongs to the bacterial ribosomal protein bS16 family.

The polypeptide is Small ribosomal subunit protein bS16 (Rickettsia akari (strain Hartford)).